The following is a 127-amino-acid chain: Small ribosomal subunit protein eS8 (127 aa).

Positions 1-25 (MTIFQGKSGKKPTGGNLKQAKKKRR) are disordered.

Belongs to the eukaryotic ribosomal protein eS8 family. Part of the 30S ribosomal subunit.

The sequence is that of Small ribosomal subunit protein eS8 from Thermoplasma volcanium (strain ATCC 51530 / DSM 4299 / JCM 9571 / NBRC 15438 / GSS1).